A 139-amino-acid polypeptide reads, in one-letter code: Myosin light chain kinase, smooth muscle (139 aa).

Residues 48–97 form a disordered region; it reads APTGENAKAPEMKARRPKSSLPPVLGTESDATVKKKPAPKTPPKAAMPPQ.

It belongs to the protein kinase superfamily. CAMK Ser/Thr protein kinase family. Interacts with SVIL. The C-terminus is deglutamylated by AGTPBP1/CCP1, AGBL1/CCP4 and AGBL4/CCP6, leading to the formation of Myosin light chain kinase, smooth muscle, deglutamylated form. The consequences of C-terminal deglutamylation are unknown.

It carries out the reaction L-seryl-[myosin light chain] + ATP = O-phospho-L-seryl-[myosin light chain] + ADP + H(+). It catalyses the reaction L-threonyl-[myosin light chain] + ATP = O-phospho-L-threonyl-[myosin light chain] + ADP + H(+). Its function is as follows. Phosphorylates a specific serine in the N-terminus of a myosin light chain. Also regulates actin-myosin interaction through a non-kinase activity. The polypeptide is Myosin light chain kinase, smooth muscle (MYLK) (Sus scrofa (Pig)).